The primary structure comprises 295 residues: tRNA dimethylallyltransferase (295 aa).

9-16 (GATATGKS) lines the ATP pocket. Substrate is bound at residue 11 to 16 (TATGKS). Residues 34 to 37 (DSRQ) form an interaction with substrate tRNA region.

It belongs to the IPP transferase family. Monomer. It depends on Mg(2+) as a cofactor.

The catalysed reaction is adenosine(37) in tRNA + dimethylallyl diphosphate = N(6)-dimethylallyladenosine(37) in tRNA + diphosphate. Its function is as follows. Catalyzes the transfer of a dimethylallyl group onto the adenine at position 37 in tRNAs that read codons beginning with uridine, leading to the formation of N6-(dimethylallyl)adenosine (i(6)A). In Nostoc sp. (strain PCC 7120 / SAG 25.82 / UTEX 2576), this protein is tRNA dimethylallyltransferase.